Reading from the N-terminus, the 32-residue chain is MSDIN-like toxin proprotein 2 (32 aa).

The propeptide occupies 1–10 (MSDINATRLP). Residues 11–17 (HLVRYPP) constitute a cross-link (cyclopeptide (His-Pro)). Positions 18–32 (YVGDGTDLTLNRGEK) are excised as a propeptide.

The protein belongs to the MSDIN fungal toxin family. Processed by the macrocyclase-peptidase enzyme POPB to yield a toxic cyclic heptapeptide. POPB first removes 10 residues from the N-terminus. Conformational trapping of the remaining peptide forces the enzyme to release this intermediate rather than proceed to macrocyclization. The enzyme rebinds the remaining peptide in a different conformation and catalyzes macrocyclization of the N-terminal 7 residues.

In terms of biological role, probable toxin that belongs to the MSDIN-like toxin family responsible for a large number of food poisoning cases and deaths. This is MSDIN-like toxin proprotein 2 from Amanita fuligineoides.